Consider the following 163-residue polypeptide: Transcriptional repressor NrdR (163 aa).

Residues 3-34 (CPSCNSESSRVVDSRSIEMGVSIRRRRECSEC) fold into a zinc finger. An ATP-cone domain is found at 46-136 (LLVVKRNGVT…VYKSFNCAED (91 aa)).

Belongs to the NrdR family. Requires Zn(2+) as cofactor.

In terms of biological role, negatively regulates transcription of bacterial ribonucleotide reductase nrd genes and operons by binding to NrdR-boxes. The sequence is that of Transcriptional repressor NrdR from Corynebacterium jeikeium (strain K411).